Reading from the N-terminus, the 321-residue chain is Acetyl-coenzyme A carboxylase carboxyl transferase subunit alpha (321 aa).

Residues 32-293 enclose the CoA carboxyltransferase C-terminal domain; it reads DISEEIARLQ…KRVLQDQLKE (262 aa).

Belongs to the AccA family. As to quaternary structure, acetyl-CoA carboxylase is a heterohexamer composed of biotin carboxyl carrier protein (AccB), biotin carboxylase (AccC) and two subunits each of ACCase subunit alpha (AccA) and ACCase subunit beta (AccD).

The protein resides in the cytoplasm. The catalysed reaction is N(6)-carboxybiotinyl-L-lysyl-[protein] + acetyl-CoA = N(6)-biotinyl-L-lysyl-[protein] + malonyl-CoA. It participates in lipid metabolism; malonyl-CoA biosynthesis; malonyl-CoA from acetyl-CoA: step 1/1. Its function is as follows. Component of the acetyl coenzyme A carboxylase (ACC) complex. First, biotin carboxylase catalyzes the carboxylation of biotin on its carrier protein (BCCP) and then the CO(2) group is transferred by the carboxyltransferase to acetyl-CoA to form malonyl-CoA. The sequence is that of Acetyl-coenzyme A carboxylase carboxyl transferase subunit alpha from Chromobacterium violaceum (strain ATCC 12472 / DSM 30191 / JCM 1249 / CCUG 213 / NBRC 12614 / NCIMB 9131 / NCTC 9757 / MK).